The sequence spans 224 residues: Phosphoribosylformylglycinamidine synthase subunit PurQ (224 aa).

The Glutamine amidotransferase type-1 domain maps to 4 to 224; sequence FGIIVFPGSN…ATDGLAMFIS (221 aa). Residue C87 is the Nucleophile of the active site. Active-site residues include H204 and E206.

Part of the FGAM synthase complex composed of 1 PurL, 1 PurQ and 2 PurS subunits.

The protein localises to the cytoplasm. The enzyme catalyses N(2)-formyl-N(1)-(5-phospho-beta-D-ribosyl)glycinamide + L-glutamine + ATP + H2O = 2-formamido-N(1)-(5-O-phospho-beta-D-ribosyl)acetamidine + L-glutamate + ADP + phosphate + H(+). It catalyses the reaction L-glutamine + H2O = L-glutamate + NH4(+). It functions in the pathway purine metabolism; IMP biosynthesis via de novo pathway; 5-amino-1-(5-phospho-D-ribosyl)imidazole from N(2)-formyl-N(1)-(5-phospho-D-ribosyl)glycinamide: step 1/2. Its function is as follows. Part of the phosphoribosylformylglycinamidine synthase complex involved in the purines biosynthetic pathway. Catalyzes the ATP-dependent conversion of formylglycinamide ribonucleotide (FGAR) and glutamine to yield formylglycinamidine ribonucleotide (FGAM) and glutamate. The FGAM synthase complex is composed of three subunits. PurQ produces an ammonia molecule by converting glutamine to glutamate. PurL transfers the ammonia molecule to FGAR to form FGAM in an ATP-dependent manner. PurS interacts with PurQ and PurL and is thought to assist in the transfer of the ammonia molecule from PurQ to PurL. The polypeptide is Phosphoribosylformylglycinamidine synthase subunit PurQ (Synechocystis sp. (strain ATCC 27184 / PCC 6803 / Kazusa)).